The primary structure comprises 397 residues: Phosphoglycerate kinase (397 aa).

Substrate contacts are provided by residues 25–27, Arg41, 64–67, Arg118, and Arg151; these read DLN and HLGR. ATP is bound by residues Lys202, Glu324, and 350-353; that span reads GGDT.

The protein belongs to the phosphoglycerate kinase family. As to quaternary structure, monomer.

It localises to the cytoplasm. The enzyme catalyses (2R)-3-phosphoglycerate + ATP = (2R)-3-phospho-glyceroyl phosphate + ADP. Its pathway is carbohydrate degradation; glycolysis; pyruvate from D-glyceraldehyde 3-phosphate: step 2/5. The chain is Phosphoglycerate kinase from Acidovorax ebreus (strain TPSY) (Diaphorobacter sp. (strain TPSY)).